Here is a 178-residue protein sequence, read N- to C-terminus: Mediator of RNA polymerase II transcription subunit 28 (178 aa).

The interval Met-1–Leu-44 is disordered. Pro residues predominate over residues Pro-13 to Leu-23. The stretch at Gln-109 to Asp-145 forms a coiled coil.

This sequence belongs to the Mediator complex subunit 28 family. Component of the Mediator complex, which is composed of MED1, MED4, MED6, MED7, MED8, MED9, MED10, MED11, MED12, MED13, MED13L, MED14, MED15, MED16, MED17, MED18, MED19, MED20, MED21, MED22, MED23, MED24, MED25, MED26, MED27, MED29, MED30, MED31, CCNC, CDK8 and CDC2L6/CDK11. The MED12, MED13, CCNC and CDK8 subunits form a distinct module termed the CDK8 module. Mediator containing the CDK8 module is less active than Mediator lacking this module in supporting transcriptional activation. Individual preparations of the Mediator complex lacking one or more distinct subunits have been variously termed ARC, CRSP, DRIP, PC2, SMCC and TRAP. Forms a ternary complex with NF2/merlin and GRB2. Binds to actin. Widely expressed. Highly expressed in vascular tissues such as placenta, testis and liver.

It is found in the nucleus. Its subcellular location is the cytoplasm. It localises to the membrane. In terms of biological role, component of the Mediator complex, a coactivator involved in the regulated transcription of nearly all RNA polymerase II-dependent genes. Mediator functions as a bridge to convey information from gene-specific regulatory proteins to the basal RNA polymerase II transcription machinery. Mediator is recruited to promoters by direct interactions with regulatory proteins and serves as a scaffold for the assembly of a functional preinitiation complex with RNA polymerase II and the general transcription factors. May be part of a complex containing NF2/merlin that participates in cellular signaling to the actin cytoskeleton downstream of tyrosine kinase signaling pathways. This is Mediator of RNA polymerase II transcription subunit 28 (MED28) from Homo sapiens (Human).